Consider the following 657-residue polypeptide: Tetracycline resistance protein TetQ (657 aa).

Residues Met17–Glu260 enclose the tr-type G domain. GTP contacts are provided by residues Ala26–Thr33, Asp90–His94, and Asn144–Asp147.

Belongs to the TRAFAC class translation factor GTPase superfamily. Classic translation factor GTPase family. TetM/TetO subfamily.

Abolishes the inhibitory effect of tetracycline on protein synthesis by non-covalently modifying ribosomes. Confers mild resistance to tetracycline when expressed in E.coli. This chain is Tetracycline resistance protein TetQ (tetQ), found in Bacteroides fragilis.